The primary structure comprises 161 residues: Peroxynitrite isomerase 2 (161 aa).

Residues 17–23 (GTWAGQG) carry the GXWXGXG motif. His152 is a binding site for heme b.

It belongs to the nitrobindin family. As to quaternary structure, homodimer. It depends on heme b as a cofactor.

It catalyses the reaction peroxynitrite = nitrate. Its pathway is nitrogen metabolism. Heme-binding protein able to scavenge peroxynitrite and to protect free L-tyrosine against peroxynitrite-mediated nitration, by acting as a peroxynitrite isomerase that converts peroxynitrite to nitrate. Therefore, this protein likely plays a role in peroxynitrite sensing and in the detoxification of reactive nitrogen and oxygen species (RNS and ROS, respectively). Is able to bind nitric oxide (NO) in vitro, but may act as a sensor of peroxynitrite levels in vivo. The sequence is that of Peroxynitrite isomerase 2 from Mycobacterium marinum (strain ATCC BAA-535 / M).